Here is a 561-residue protein sequence, read N- to C-terminus: Dihydroxy-acid dehydratase (561 aa).

Residue cysteine 51 coordinates [2Fe-2S] cluster. Residue aspartate 83 coordinates Mg(2+). Cysteine 124 contacts [2Fe-2S] cluster. Mg(2+)-binding residues include aspartate 125 and lysine 126. The residue at position 126 (lysine 126) is an N6-carboxylysine. Cysteine 196 lines the [2Fe-2S] cluster pocket. Glutamate 448 serves as a coordination point for Mg(2+). Serine 474 (proton acceptor) is an active-site residue.

The protein belongs to the IlvD/Edd family. As to quaternary structure, homodimer. It depends on [2Fe-2S] cluster as a cofactor. Requires Mg(2+) as cofactor.

It carries out the reaction (2R)-2,3-dihydroxy-3-methylbutanoate = 3-methyl-2-oxobutanoate + H2O. The catalysed reaction is (2R,3R)-2,3-dihydroxy-3-methylpentanoate = (S)-3-methyl-2-oxopentanoate + H2O. It functions in the pathway amino-acid biosynthesis; L-isoleucine biosynthesis; L-isoleucine from 2-oxobutanoate: step 3/4. It participates in amino-acid biosynthesis; L-valine biosynthesis; L-valine from pyruvate: step 3/4. Functions in the biosynthesis of branched-chain amino acids. Catalyzes the dehydration of (2R,3R)-2,3-dihydroxy-3-methylpentanoate (2,3-dihydroxy-3-methylvalerate) into 2-oxo-3-methylpentanoate (2-oxo-3-methylvalerate) and of (2R)-2,3-dihydroxy-3-methylbutanoate (2,3-dihydroxyisovalerate) into 2-oxo-3-methylbutanoate (2-oxoisovalerate), the penultimate precursor to L-isoleucine and L-valine, respectively. The chain is Dihydroxy-acid dehydratase from Pyrobaculum neutrophilum (strain DSM 2338 / JCM 9278 / NBRC 100436 / V24Sta) (Thermoproteus neutrophilus).